Reading from the N-terminus, the 92-residue chain is Small cysteine and glycine repeat-containing protein 9 (92 aa).

The interval 4–72 (CGCGSCGCSG…CCRRTCSSCG (69 aa)) is 11 X 2 AA repeats of CG.

It belongs to the KRTAP type 28 family.

In terms of biological role, in the hair cortex, hair keratin intermediate filaments are embedded in an interfilamentous matrix, consisting of hair keratin-associated proteins (KRTAP), which are essential for the formation of a rigid and resistant hair shaft through their extensive disulfide bond cross-linking with abundant cysteine residues of hair keratins. The matrix proteins include the high-sulfur and high-glycine-tyrosine keratins. This Homo sapiens (Human) protein is Small cysteine and glycine repeat-containing protein 9.